A 468-amino-acid polypeptide reads, in one-letter code: Glutamate--tRNA ligase (468 aa).

The 'HIGH' region motif lies at 8 to 18 (PSPTGFLHVGG). 4 residues coordinate Zn(2+): C97, C99, C124, and D126. A 'KMSKS' region motif is present at residues 236–240 (KLSKR). Position 239 (K239) interacts with ATP.

This sequence belongs to the class-I aminoacyl-tRNA synthetase family. Glutamate--tRNA ligase type 1 subfamily. As to quaternary structure, monomer. Zn(2+) serves as cofactor.

It is found in the cytoplasm. The enzyme catalyses tRNA(Glu) + L-glutamate + ATP = L-glutamyl-tRNA(Glu) + AMP + diphosphate. In terms of biological role, catalyzes the attachment of glutamate to tRNA(Glu) in a two-step reaction: glutamate is first activated by ATP to form Glu-AMP and then transferred to the acceptor end of tRNA(Glu). This chain is Glutamate--tRNA ligase, found in Francisella tularensis subsp. mediasiatica (strain FSC147).